A 55-amino-acid chain; its full sequence is uncharacterized protein (55 aa).

This is an uncharacterized protein from Salmonella typhimurium (strain LT2 / SGSC1412 / ATCC 700720).